Here is a 294-residue protein sequence, read N- to C-terminus: 33 kDa chaperonin (294 aa).

2 disulfides stabilise this stretch: Cys-238/Cys-240 and Cys-271/Cys-274.

The protein belongs to the HSP33 family. Under oxidizing conditions two disulfide bonds are formed involving the reactive cysteines. Under reducing conditions zinc is bound to the reactive cysteines and the protein is inactive.

The protein localises to the cytoplasm. Its function is as follows. Redox regulated molecular chaperone. Protects both thermally unfolding and oxidatively damaged proteins from irreversible aggregation. Plays an important role in the bacterial defense system toward oxidative stress. In Clostridium novyi (strain NT), this protein is 33 kDa chaperonin.